A 684-amino-acid polypeptide reads, in one-letter code: Threonine--tRNA ligase (684 aa).

Positions 1-64 (MTAPNPSSLV…ESDTEVEPVA (64 aa)) constitute a TGS domain. Residues 261 to 567 (DHRKLGVELD…LTEHYAGAFP (307 aa)) are catalytic. The Zn(2+) site is built by Cys-366, His-417, and His-544.

Belongs to the class-II aminoacyl-tRNA synthetase family. As to quaternary structure, homodimer. It depends on Zn(2+) as a cofactor.

The protein resides in the cytoplasm. The enzyme catalyses tRNA(Thr) + L-threonine + ATP = L-threonyl-tRNA(Thr) + AMP + diphosphate + H(+). Catalyzes the attachment of threonine to tRNA(Thr) in a two-step reaction: L-threonine is first activated by ATP to form Thr-AMP and then transferred to the acceptor end of tRNA(Thr). Also edits incorrectly charged L-seryl-tRNA(Thr). This chain is Threonine--tRNA ligase, found in Mycobacteroides abscessus (strain ATCC 19977 / DSM 44196 / CCUG 20993 / CIP 104536 / JCM 13569 / NCTC 13031 / TMC 1543 / L948) (Mycobacterium abscessus).